We begin with the raw amino-acid sequence, 107 residues long: Large ribosomal subunit protein bL21 (107 aa).

This sequence belongs to the bacterial ribosomal protein bL21 family. In terms of assembly, part of the 50S ribosomal subunit. Contacts protein L20.

Functionally, this protein binds to 23S rRNA in the presence of protein L20. The chain is Large ribosomal subunit protein bL21 from Pseudothermotoga lettingae (strain ATCC BAA-301 / DSM 14385 / NBRC 107922 / TMO) (Thermotoga lettingae).